A 192-amino-acid polypeptide reads, in one-letter code: Thymidylate kinase (192 aa).

7–14 lines the ATP pocket; it reads GVDGVGKS.

This sequence belongs to the thymidylate kinase family.

It carries out the reaction dTMP + ATP = dTDP + ADP. Its function is as follows. Phosphorylation of dTMP to form dTDP in both de novo and salvage pathways of dTTP synthesis. This is Thymidylate kinase from Campylobacter fetus subsp. fetus (strain 82-40).